Consider the following 469-residue polypeptide: ATP-dependent protease ATPase subunit HslU (469 aa).

ATP is bound by residues I24, 66–71 (GVGKTE), D282, E347, and R419.

Belongs to the ClpX chaperone family. HslU subfamily. As to quaternary structure, a double ring-shaped homohexamer of HslV is capped on each side by a ring-shaped HslU homohexamer. The assembly of the HslU/HslV complex is dependent on binding of ATP.

It localises to the cytoplasm. Functionally, ATPase subunit of a proteasome-like degradation complex; this subunit has chaperone activity. The binding of ATP and its subsequent hydrolysis by HslU are essential for unfolding of protein substrates subsequently hydrolyzed by HslV. HslU recognizes the N-terminal part of its protein substrates and unfolds these before they are guided to HslV for hydrolysis. This is ATP-dependent protease ATPase subunit HslU from Listeria welshimeri serovar 6b (strain ATCC 35897 / DSM 20650 / CCUG 15529 / CIP 8149 / NCTC 11857 / SLCC 5334 / V8).